The chain runs to 64 residues: Large ribosomal subunit protein uL29 (64 aa).

Belongs to the universal ribosomal protein uL29 family.

The sequence is that of Large ribosomal subunit protein uL29 from Chloroherpeton thalassium (strain ATCC 35110 / GB-78).